A 147-amino-acid chain; its full sequence is Acidic phospholipase A2 S7-48J (147 aa).

A signal peptide spans 1–19 (MYPAHLLVLLAVCVSLLGA). Residues 20-27 (SDIPPQPL) constitute a propeptide that is removed on maturation. 7 disulfide bridges follow: C38/C99, C54/C146, C56/C72, C71/C127, C78/C120, C88/C113, and C106/C118. Ca(2+) contacts are provided by Y55, G57, and G59. H75 is an active-site residue. D76 is a Ca(2+) binding site. The active site involves D121.

This sequence belongs to the phospholipase A2 family. Group I subfamily. D49 sub-subfamily. Requires Ca(2+) as cofactor. Expressed by the venom gland.

The protein resides in the secreted. It carries out the reaction a 1,2-diacyl-sn-glycero-3-phosphocholine + H2O = a 1-acyl-sn-glycero-3-phosphocholine + a fatty acid + H(+). Its function is as follows. Snake venom phospholipase A2 (PLA2) that inhibits collagen-induced platelet aggregation. PLA2 catalyzes the calcium-dependent hydrolysis of the 2-acyl groups in 3-sn-phosphoglycerides. This Austrelaps superbus (Lowland copperhead snake) protein is Acidic phospholipase A2 S7-48J.